Here is a 198-residue protein sequence, read N- to C-terminus: Large ribosomal subunit protein uL24c (198 aa).

The transit peptide at 1 to 50 directs the protein to the chloroplast; sequence MATMSALQSSFTSLSLSPSSSFLGQRLISPISLSVTSPVKPAENPCLVLA.

The protein belongs to the universal ribosomal protein uL24 family. As to quaternary structure, part of the 50S ribosomal subunit.

It localises to the plastid. Its subcellular location is the chloroplast. In terms of biological role, one of two assembly initiator proteins, it binds directly to the 5'-end of the 23S rRNA, where it nucleates assembly of the 50S subunit. Required for optimal plastid performance in terms of photosynthesis and growth. Required for the translation of plastid mRNAs. Plays a critical role in biosynthesis of thylakoid membrane proteins encoded by chloroplast genes. The protein is Large ribosomal subunit protein uL24c (RPL24) of Arabidopsis thaliana (Mouse-ear cress).